The following is a 247-amino-acid chain: Chymase (247 aa).

Residues 1–19 (MLLLPLPLLLLFLCSRAEA) form the signal peptide. The propeptide at 20 to 21 (GE) is activation peptide. The Peptidase S1 domain maps to 22–245 (IIGGTECKPH…YRPWINKILQ (224 aa)). An intrachain disulfide couples Cys-51 to Cys-67. The active-site Charge relay system is His-66. N-linked (GlcNAc...) asparagine glycosylation is found at Asn-80 and Asn-103. The active-site Charge relay system is the Asp-110. Intrachain disulfides connect Cys-144–Cys-209 and Cys-175–Cys-188. Ser-203 acts as the Charge relay system in catalysis.

The protein belongs to the peptidase S1 family. Granzyme subfamily.

It localises to the secreted. The protein resides in the cytoplasmic granule. It catalyses the reaction Preferential cleavage: Phe-|-Xaa &gt; Tyr-|-Xaa &gt; Trp-|-Xaa &gt; Leu-|-Xaa.. Its function is as follows. Major secreted protease of mast cells with suspected roles in vasoactive peptide generation, extracellular matrix degradation, and regulation of gland secretion. This is Chymase (CMA1) from Papio hamadryas (Hamadryas baboon).